We begin with the raw amino-acid sequence, 614 residues long: Dihydroxy-acid dehydratase (614 aa).

Asp81 contacts Mg(2+). A [2Fe-2S] cluster-binding site is contributed by Cys122. 2 residues coordinate Mg(2+): Asp123 and Lys124. Position 124 is an N6-carboxylysine (Lys124). Residue Cys195 participates in [2Fe-2S] cluster binding. Glu491 provides a ligand contact to Mg(2+). Ser517 functions as the Proton acceptor in the catalytic mechanism.

It belongs to the IlvD/Edd family. Homodimer. [2Fe-2S] cluster is required as a cofactor. Requires Mg(2+) as cofactor.

The catalysed reaction is (2R)-2,3-dihydroxy-3-methylbutanoate = 3-methyl-2-oxobutanoate + H2O. It carries out the reaction (2R,3R)-2,3-dihydroxy-3-methylpentanoate = (S)-3-methyl-2-oxopentanoate + H2O. The protein operates within amino-acid biosynthesis; L-isoleucine biosynthesis; L-isoleucine from 2-oxobutanoate: step 3/4. It participates in amino-acid biosynthesis; L-valine biosynthesis; L-valine from pyruvate: step 3/4. In terms of biological role, functions in the biosynthesis of branched-chain amino acids. Catalyzes the dehydration of (2R,3R)-2,3-dihydroxy-3-methylpentanoate (2,3-dihydroxy-3-methylvalerate) into 2-oxo-3-methylpentanoate (2-oxo-3-methylvalerate) and of (2R)-2,3-dihydroxy-3-methylbutanoate (2,3-dihydroxyisovalerate) into 2-oxo-3-methylbutanoate (2-oxoisovalerate), the penultimate precursor to L-isoleucine and L-valine, respectively. In Nitrobacter winogradskyi (strain ATCC 25391 / DSM 10237 / CIP 104748 / NCIMB 11846 / Nb-255), this protein is Dihydroxy-acid dehydratase.